A 51-amino-acid chain; its full sequence is Insulin (51 aa).

Intrachain disulfides connect Cys7/Cys37, Cys19/Cys50, and Cys36/Cys41.

The protein belongs to the insulin family. As to quaternary structure, heterodimer of a B chain and an A chain linked by two disulfide bonds.

It localises to the secreted. In terms of biological role, insulin decreases blood glucose concentration. It increases cell permeability to monosaccharides, amino acids and fatty acids. It accelerates glycolysis, the pentose phosphate cycle, and glycogen synthesis in liver. In Saimiri sciureus (Common squirrel monkey), this protein is Insulin (INS).